The primary structure comprises 409 residues: Lissencephaly-1 homolog (409 aa).

The region spanning 7–39 (RRERSNQAIADYLGSNGYTDALEAFRKEADMPN) is the LisH domain. Positions 54 to 81 (TSVIRLQKKVMELEAKLSEAEKEAIEGA) form a coiled coil. 7 WD repeats span residues 104 to 145 (GHRA…RTLK), 146 to 185 (GHTD…ECVK), 189 to 228 (GHDH…CVKT), 231 to 270 (GHRE…CKAE), 273 to 332 (EHEN…CLFT), 335 to 374 (GHDN…CMKT), and 377 to 409 (AHSH…WECR).

It belongs to the WD repeat LIS1/nudF family.

The protein localises to the cytoplasm. It is found in the cytoskeleton. The protein resides in the microtubule organizing center. Its subcellular location is the centrosome. Positively regulates the activity of the minus-end directed microtubule motor protein dynein. May enhance dynein-mediated microtubule sliding by targeting dynein to the microtubule plus end. Required for several dynein- and microtubule-dependent processes. The chain is Lissencephaly-1 homolog from Aedes aegypti (Yellowfever mosquito).